The sequence spans 65 residues: Metallothionein-like protein type 3 (65 aa).

It belongs to the metallothionein superfamily. Type 15 family.

Metallothioneins have a high content of cysteine residues that bind various heavy metals. The chain is Metallothionein-like protein type 3 from Musa acuminata (Banana).